The chain runs to 371 residues: MNQRHLWTIVALSVTVLGTPAVGRTQTTKATAPAQQILASDAVKVGEFQSSEGKRTSDAVITSIHPHNLGGRRAATLFIRKIPVLTFVSSNPVASVETKVGAIGDNEGVQPYALNTEKSVQVASLGNLADARIQNRSQNDDPVKRASLVAAKINQLIRDNVKADQITVSWKGADSSLVASQSQNKSSSSQQKSERYTIKVKNQELVEINQNTRLADSTNNLANDALQATNRLRRLVGNASPLKEIANLPARSPKRSSNPIANLPQRIASSIRLSFQGIASFYGRGDGFAGRPTATGERFNPEAMTAAHRSLPFGTRVRVTNTRNGRSVVVRINDRGPFTRGRVIDLSTGAARVLGMIGSGVAPVRIEVLGR.

The signal sequence occupies residues 1–25 (MNQRHLWTIVALSVTVLGTPAVGRT). Low complexity predominate over residues 177 to 191 (LVASQSQNKSSSSQQ). Residues 177-196 (LVASQSQNKSSSSQQKSERY) form a disordered region.

The protein belongs to the RlpA family.

Its function is as follows. Lytic transglycosylase with a strong preference for naked glycan strands that lack stem peptides. The sequence is that of Probable endolytic peptidoglycan transglycosylase RlpA from Nostoc sp. (strain PCC 7120 / SAG 25.82 / UTEX 2576).